A 331-amino-acid polypeptide reads, in one-letter code: Cysteine and histidine-rich domain-containing protein 1 (331 aa).

An N-acetylalanine modification is found at Ala2. The tract at residues Ala2–Val77 is interaction with PPP5C. Residues Cys5, Cys10, Cys24, His27, Cys42, and Cys43 each coordinate Zn(2+). CHORD domains are found at residues Cys5–His64 and Cys157–His216. At Thr47 the chain carries Phosphothreonine. Ser51 bears the Phosphoserine mark. Positions 59, 64, 157, 162, 176, 179, 194, 195, 211, and 216 each coordinate Zn(2+). Positions Gly62–Lys82 are disordered. Residues His64–Lys82 are compositionally biased toward basic and acidic residues. The interaction with HSP90AA1 and HSP90AB1 stretch occupies residues Asn65–Glu316. Residues Val227–Glu316 form the CS domain.

Interacts with HSP90AA1, HSP90AB1, PPP5C, ROCK1 and ROCK2.

Regulates centrosome duplication, probably by inhibiting the kinase activity of ROCK2. Proposed to act as co-chaperone for HSP90. May play a role in the regulation of NOD1 via a HSP90 chaperone complex. In vitro, has intrinsic chaperone activity. This function may be achieved by inhibiting association of ROCK2 with NPM1. Plays a role in ensuring the localization of the tyrosine kinase receptor EGFR to the plasma membrane, and thus ensures the subsequent regulation of EGFR activity and EGF-induced actin cytoskeleton remodeling. Involved in stress response. Prevents tumorigenesis. This is Cysteine and histidine-rich domain-containing protein 1 (Chordc1) from Rattus norvegicus (Rat).